Here is a 119-residue protein sequence, read N- to C-terminus: MDKIVLEGCRFYGYHGAFKEEQTLGQIFLVDLELSVDLQAASLSDQLTDTVHYGMVFDSVRQLVEGEKFILIERLAGAICEQLFNEFPPIEAIKVAIKKENPPIAGHYKAVGIELERQR.

Substrate is bound by residues E21, Y53, and 72–73 (IE). Catalysis depends on K99, which acts as the Proton donor/acceptor.

Belongs to the DHNA family.

The enzyme catalyses 7,8-dihydroneopterin = 6-hydroxymethyl-7,8-dihydropterin + glycolaldehyde. It functions in the pathway cofactor biosynthesis; tetrahydrofolate biosynthesis; 2-amino-4-hydroxy-6-hydroxymethyl-7,8-dihydropteridine diphosphate from 7,8-dihydroneopterin triphosphate: step 3/4. Catalyzes the conversion of 7,8-dihydroneopterin to 6-hydroxymethyl-7,8-dihydropterin. This Streptococcus pyogenes serotype M1 protein is Dihydroneopterin aldolase (folB).